Reading from the N-terminus, the 256-residue chain is Necrosis-inducing protein NPP1 (256 aa).

A Conserved undecapeptide motif motif is present at residues 111-121 (AIMYAWYFPKG). A Conserved heptapeptide motif motif is present at residues 133-139 (GHRHEWE).

This sequence belongs to the Necrosis inducing protein (NPP1) family.

It localises to the secreted. In terms of biological role, secreted effector that acts as a pathogen-associated molecular pattern (PAMP) recognized by the plant immune system. The chain is Necrosis-inducing protein NPP1 from Phytophthora cinnamomi (Cinnamon fungus).